Consider the following 545-residue polypeptide: Glucose-6-phosphate isomerase (545 aa).

Glutamate 351 (proton donor) is an active-site residue. Catalysis depends on residues histidine 382 and lysine 510.

Belongs to the GPI family.

It is found in the cytoplasm. The catalysed reaction is alpha-D-glucose 6-phosphate = beta-D-fructose 6-phosphate. It participates in carbohydrate biosynthesis; gluconeogenesis. It functions in the pathway carbohydrate degradation; glycolysis; D-glyceraldehyde 3-phosphate and glycerone phosphate from D-glucose: step 2/4. Its function is as follows. Catalyzes the reversible isomerization of glucose-6-phosphate to fructose-6-phosphate. The polypeptide is Glucose-6-phosphate isomerase (Shewanella amazonensis (strain ATCC BAA-1098 / SB2B)).